The sequence spans 344 residues: Serine proteinase inhibitor 2 (344 aa).

This sequence belongs to the serpin family. Poxviruses subfamily.

The protein resides in the host cytoplasm. Viral serpin that inhibits both cysteine and serine proteinases involved in the regulation of host inflammatory and apoptosis processes. Major anti-apoptotic protein which inhibits both intrinsic and extrinsic pathways and strongly cleaves host CASP1 and CASP8 but is a rather poor inhibitor of host CASP3. Prevents the proteolytic activity of host interleukin-1-beta converting enzyme (ICE) and ICE-like enzymes. Can also block apoptosis through host tumor necrosis factor (TNF) receptor. The inhibition of host ICE is an example of a 'cross-class' interaction, in which a serpin inhibits a non-serine proteinase. Also inhibits granzyme B. The chain is Serine proteinase inhibitor 2 (OPG199) from Cynomys gunnisoni (Gunnison's prairie dog).